Here is a 62-residue protein sequence, read N- to C-terminus: MSTQLDPTQLAIEFLRRDQSNLSPAQYLKRLKQLELEFADLLTLSSAELKEEIYFAWRLGVH.

This is an uncharacterized protein from Escherichia coli O157:H7.